Here is a 405-residue protein sequence, read N- to C-terminus: L-rhamnonate dehydratase (405 aa).

The substrate site is built by H33 and R59. Mg(2+) contacts are provided by D226, E252, and E280. The Proton acceptor role is filled by H329. E349 serves as a coordination point for substrate.

It belongs to the mandelate racemase/muconate lactonizing enzyme family. RhamD subfamily. In terms of assembly, homooctamer; tetramer of dimers. Mg(2+) is required as a cofactor.

It carries out the reaction L-rhamnonate = 2-dehydro-3-deoxy-L-rhamnonate + H2O. In terms of biological role, catalyzes the dehydration of L-rhamnonate to 2-keto-3-deoxy-L-rhamnonate (KDR). In Escherichia coli O6:H1 (strain CFT073 / ATCC 700928 / UPEC), this protein is L-rhamnonate dehydratase.